We begin with the raw amino-acid sequence, 417 residues long: NADH-quinone oxidoreductase subunit D (417 aa).

The protein belongs to the complex I 49 kDa subunit family. In terms of assembly, NDH-1 is composed of 14 different subunits. Subunits NuoB, C, D, E, F, and G constitute the peripheral sector of the complex.

It localises to the cell inner membrane. It catalyses the reaction a quinone + NADH + 5 H(+)(in) = a quinol + NAD(+) + 4 H(+)(out). Functionally, NDH-1 shuttles electrons from NADH, via FMN and iron-sulfur (Fe-S) centers, to quinones in the respiratory chain. The immediate electron acceptor for the enzyme in this species is believed to be ubiquinone. Couples the redox reaction to proton translocation (for every two electrons transferred, four hydrogen ions are translocated across the cytoplasmic membrane), and thus conserves the redox energy in a proton gradient. The protein is NADH-quinone oxidoreductase subunit D of Burkholderia cenocepacia (strain HI2424).